Reading from the N-terminus, the 243-residue chain is Small ribosomal subunit protein eS4 (243 aa).

Positions 37-99 constitute an S4 RNA-binding domain; sequence IPLALLLKHY…SDLYFRIVPD (63 aa).

This sequence belongs to the eukaryotic ribosomal protein eS4 family.

The chain is Small ribosomal subunit protein eS4 (rps4e) from Sulfurisphaera tokodaii (strain DSM 16993 / JCM 10545 / NBRC 100140 / 7) (Sulfolobus tokodaii).